A 284-amino-acid chain; its full sequence is ATP phosphoribosyltransferase (284 aa).

This sequence belongs to the ATP phosphoribosyltransferase family. Long subfamily. Mg(2+) is required as a cofactor.

It localises to the cytoplasm. The enzyme catalyses 1-(5-phospho-beta-D-ribosyl)-ATP + diphosphate = 5-phospho-alpha-D-ribose 1-diphosphate + ATP. It functions in the pathway amino-acid biosynthesis; L-histidine biosynthesis; L-histidine from 5-phospho-alpha-D-ribose 1-diphosphate: step 1/9. Feedback inhibited by histidine. Functionally, catalyzes the condensation of ATP and 5-phosphoribose 1-diphosphate to form N'-(5'-phosphoribosyl)-ATP (PR-ATP). Has a crucial role in the pathway because the rate of histidine biosynthesis seems to be controlled primarily by regulation of HisG enzymatic activity. In Methanococcoides burtonii (strain DSM 6242 / NBRC 107633 / OCM 468 / ACE-M), this protein is ATP phosphoribosyltransferase.